Here is a 309-residue protein sequence, read N- to C-terminus: Homoserine kinase (309 aa).

Position 91 to 101 (91 to 101) interacts with ATP; that stretch reads PIGSGLGSSAC.

The protein belongs to the GHMP kinase family. Homoserine kinase subfamily.

Its subcellular location is the cytoplasm. The catalysed reaction is L-homoserine + ATP = O-phospho-L-homoserine + ADP + H(+). It participates in amino-acid biosynthesis; L-threonine biosynthesis; L-threonine from L-aspartate: step 4/5. Functionally, catalyzes the ATP-dependent phosphorylation of L-homoserine to L-homoserine phosphate. This Escherichia fergusonii (strain ATCC 35469 / DSM 13698 / CCUG 18766 / IAM 14443 / JCM 21226 / LMG 7866 / NBRC 102419 / NCTC 12128 / CDC 0568-73) protein is Homoserine kinase.